The primary structure comprises 285 residues: (3S)-malyl-CoA thioesterase (285 aa).

2 residues coordinate substrate: arginine 70 and glutamate 122. The Mg(2+) site is built by glutamate 122 and aspartate 148.

Belongs to the HpcH/HpaI aldolase family. Homodimer or homotrimer. Requires Mg(2+) as cofactor.

The enzyme catalyses (S)-malyl-CoA + H2O = (S)-malate + CoA + H(+). Functionally, catalyzes the hydrolysis of (3S)-malyl-CoA to (3S)-malate and free CoA. Inactive towards beta-methylmalyl-CoA and other CoA esters. This is (3S)-malyl-CoA thioesterase from Cereibacter sphaeroides (strain KD131 / KCTC 12085) (Rhodobacter sphaeroides).